Reading from the N-terminus, the 90-residue chain is Small ribosomal subunit protein uS15c (90 aa).

Belongs to the universal ribosomal protein uS15 family. Part of the 30S ribosomal subunit.

The protein resides in the plastid. Its subcellular location is the chloroplast. The sequence is that of Small ribosomal subunit protein uS15c (rps15) from Acorus calamus (Sweet flag).